A 373-amino-acid chain; its full sequence is Type 2 DNA topoisomerase 6 subunit A (373 aa).

A Topo IIA-type catalytic domain is found at glutamine 15–alanine 153. Tyrosine 110 (O-(5'-phospho-DNA)-tyrosine intermediate) is an active-site residue. Residues glutamate 206 and aspartate 258 each coordinate Mg(2+).

Belongs to the TOP6A family. As to quaternary structure, homodimer. Heterotetramer of two Top6A and two Top6B chains. It depends on Mg(2+) as a cofactor.

The catalysed reaction is ATP-dependent breakage, passage and rejoining of double-stranded DNA.. Relaxes both positive and negative superturns and exhibits a strong decatenase activity. This chain is Type 2 DNA topoisomerase 6 subunit A, found in Methanosarcina acetivorans (strain ATCC 35395 / DSM 2834 / JCM 12185 / C2A).